We begin with the raw amino-acid sequence, 109 residues long: Nucleoid-associated protein MS1507 (109 aa).

Residues 1-21 (MFGKGGLGNLMKQAQQMQERM) are disordered.

The protein belongs to the YbaB/EbfC family. Homodimer.

Its subcellular location is the cytoplasm. It is found in the nucleoid. Its function is as follows. Binds to DNA and alters its conformation. May be involved in regulation of gene expression, nucleoid organization and DNA protection. The chain is Nucleoid-associated protein MS1507 from Mannheimia succiniciproducens (strain KCTC 0769BP / MBEL55E).